A 224-amino-acid polypeptide reads, in one-letter code: 7-cyano-7-deazaguanine synthase (224 aa).

Residue 8–18 (LSGGMDSAAVI) coordinates ATP. The Zn(2+) site is built by Cys-186, Cys-196, Cys-199, and Cys-202.

Belongs to the QueC family. The cofactor is Zn(2+).

The enzyme catalyses 7-carboxy-7-deazaguanine + NH4(+) + ATP = 7-cyano-7-deazaguanine + ADP + phosphate + H2O + H(+). Its pathway is purine metabolism; 7-cyano-7-deazaguanine biosynthesis. Its function is as follows. Catalyzes the ATP-dependent conversion of 7-carboxy-7-deazaguanine (CDG) to 7-cyano-7-deazaguanine (preQ(0)). The polypeptide is 7-cyano-7-deazaguanine synthase (Xanthomonas euvesicatoria pv. vesicatoria (strain 85-10) (Xanthomonas campestris pv. vesicatoria)).